The following is a 103-amino-acid chain: Small ribosomal subunit protein uS10 (103 aa).

Belongs to the universal ribosomal protein uS10 family. In terms of assembly, part of the 30S ribosomal subunit.

Functionally, involved in the binding of tRNA to the ribosomes. This Acidovorax sp. (strain JS42) protein is Small ribosomal subunit protein uS10.